The sequence spans 3130 residues: DNA polymerase zeta catalytic subunit (3130 aa).

Disordered stretches follow at residues 263 to 295, 425 to 457, 487 to 510, 524 to 548, 697 to 728, and 817 to 871; these read AIWE…VPAT, GYRG…NEPQ, LCRN…MEWS, LDGT…SSVI, PNEN…EKGN, and VTYK…EKDN. The segment covering 286–295 has biased composition (basic and acidic residues); that stretch reads SQDHRFVPAT. Over residues 497–509 the composition is skewed to acidic residues; the sequence is EDDDSSSGEEMEW. Composition is skewed to polar residues over residues 533–548 and 699–728; these read DNPL…SSVI and ENTL…EKGN. Over residues 828-838 the composition is skewed to basic residues; it reads SRLKLNKRKLA. Positions 842 to 854 are enriched in low complexity; that stretch reads ETSTKSSETGSTK. A compositionally biased stretch (polar residues) spans 855 to 866; sequence DNFIQNNPCNSN. At S1030 the chain carries Phosphoserine. 3 disordered regions span residues 1035 to 1095, 1162 to 1231, and 1537 to 1600; these read YPIY…YNAE, SRIG…DEKI, and RQQK…KLLK. T1041 bears the Phosphothreonine mark. Composition is skewed to basic residues over residues 1043–1061 and 1166–1179; these read KKSH…KTGK and KTSR…KSKA. The span at 1213–1231 shows a compositional bias: basic and acidic residues; the sequence is KTNEKGTSRKHTTLKDEKI. Polar residues predominate over residues 1540–1565; it reads KAQNANTTQDPLSNKHQPNKNISGSL. The span at 1570-1589 shows a compositional bias: basic residues; that stretch reads ANKRTRSVTSPRKPRTPRST. Over residues 1590 to 1600 the composition is skewed to basic and acidic residues; the sequence is KQKEKIPKLLK. Phosphoserine is present on S1724. Disordered regions lie at residues 1845 to 1882, 1962 to 1984, 2017 to 2050, 2080 to 2150, and 2216 to 2236; these read NDML…KPLM, NPRP…SNSP, ERSK…PVVP, PTTG…SPVE, and APGL…NKKG. A mediates interaction with MAD2L2 region spans residues 1847–1898; it reads MLTPTPDSSPRSTSSPSQSKNGSFTPRTANILKPLMSPPSREEIMATLLDHD. Low complexity predominate over residues 1849-1865; sequence TPTPDSSPRSTSSPSQS. Phosphoserine is present on S1967. A compositionally biased stretch (polar residues) spans 2080–2092; that stretch reads PTTGCSQTASESQ. The span at 2113 to 2122 shows a compositional bias: low complexity; it reads YYISYSSPDS. A compositionally biased stretch (polar residues) spans 2221-2236; it reads PLSTEPKTQKLSNKKG. 4 residues coordinate Zn(2+): C3042, C3045, C3054, and C3057. Residues 3042-3057 form a CysA-type zinc finger; that stretch reads CPVCDDLTQHGICSKC. Residues C3086, C3089, C3099, and C3104 each contribute to the [4Fe-4S] cluster site. The CysB motif motif lies at 3086–3104; it reads CKNCTGCFDRHIPCVSLNC.

Belongs to the DNA polymerase type-B family. As to quaternary structure, heterodimer with MAD2L2. This dimer forms the minimal DNA polymerase zeta complex (Pol-zeta2), with REV3L bearing DNA polymerase catalytic activity, although its activity is very low in this context. Component of the tetrameric Pol-zeta complex (Pol-zeta4), which consists of REV3L, MAD2L2, POLD2 and POLD3; Pol-zeta4 is the fully active form of DNA polymerase zeta. The cofactor is [4Fe-4S] cluster. As to expression, ubiquitously expressed.

The protein resides in the nucleus. The catalysed reaction is DNA(n) + a 2'-deoxyribonucleoside 5'-triphosphate = DNA(n+1) + diphosphate. Catalytic subunit of the DNA polymerase zeta complex, an error-prone polymerase specialized in translesion DNA synthesis (TLS). Lacks an intrinsic 3'-5' exonuclease activity and thus has no proofreading function. The protein is DNA polymerase zeta catalytic subunit (REV3L) of Homo sapiens (Human).